Here is an 86-residue protein sequence, read N- to C-terminus: Putative membrane protein insertion efficiency factor (86 aa).

The protein belongs to the UPF0161 family.

Its subcellular location is the cell inner membrane. Functionally, could be involved in insertion of integral membrane proteins into the membrane. In Ruegeria sp. (strain TM1040) (Silicibacter sp.), this protein is Putative membrane protein insertion efficiency factor.